The chain runs to 508 residues: Phytepsin (508 aa).

The N-terminal stretch at 1 to 27 (MGTRGLALALLAAVLLLQTVLPAASEA) is a signal peptide. The propeptide at 28 to 66 (EGLVRIALKKRPIDRNSRVATGLSGGEEQPLLSGANPLR) is activation peptide. The region spanning 84–505 (YFGEIGVGTP…DYGKLRIGFA (422 aa)) is the Peptidase A1 domain. Asp102 is an active-site residue. Cystine bridges form between Cys115/Cys121 and Cys280/Cys284. The active site involves Asp289. Residues 314 to 419 (VVSQECKTIV…NQLCNRLPSP (106 aa)) enclose the Saposin B-type domain. 4 disulfide bridges follow: Cys319–Cys413, Cys344–Cys385, Cys350–Cys382, and Cys427–Cys464. N-linked (GlcNAc...) asparagine glycosylation occurs at Asn399.

This sequence belongs to the peptidase A1 family. In terms of assembly, heterodimer of two subunits (29 kDa and 11 kDa) processed from the precursor molecule. A large enzyme (32 kDa and 16 kDa) is an intermediate precursor form. In terms of tissue distribution, embryo and leaf.

The protein resides in the vacuole. The enzyme catalyses Prefers hydrophobic residues Phe, Val, Ile, Leu, and Ala at P1 and P1', but also cleaves -Phe-|-Asp- and -Asp-|-Asp- bonds in 2S albumin from plant seeds.. Functionally, involved in the breakdown of propeptides of storage proteins in protein-storage vacuoles. In Hordeum vulgare (Barley), this protein is Phytepsin.